The primary structure comprises 2136 residues: Protein Ycf2 (2136 aa).

1404–1411 (GPIETGRS) provides a ligand contact to ATP.

It belongs to the Ycf2 family.

It localises to the plastid. The protein resides in the chloroplast stroma. Its function is as follows. Probable ATPase of unknown function. Its presence in a non-photosynthetic plant (Epifagus virginiana) and experiments in tobacco indicate that it has an essential function which is probably not related to photosynthesis. This chain is Protein Ycf2, found in Marchantia polymorpha (Common liverwort).